Consider the following 367-residue polypeptide: Peptide chain release factor 2 (367 aa).

At Gln-254 the chain carries N5-methylglutamine.

The protein belongs to the prokaryotic/mitochondrial release factor family. Methylated by PrmC. Methylation increases the termination efficiency of RF2.

The protein localises to the cytoplasm. Functionally, peptide chain release factor 2 directs the termination of translation in response to the peptide chain termination codons UGA and UAA. This is Peptide chain release factor 2 from Burkholderia mallei (strain ATCC 23344).